A 465-amino-acid polypeptide reads, in one-letter code: BTB/POZ and MATH domain-containing protein 4 (465 aa).

The tract at residues 12–40 (LQRQNPLQKSEQQRRNFEMPSPPTTTSLS) is disordered. Residues 46–180 (NGSHSFTIKG…DDCLKINCTV (135 aa)) enclose the MATH domain. Residues 216-282 (SDITFNVSGE…IYKDALIEDA (67 aa)) form the BTB domain. 2 disordered regions span residues 395–429 (SGGG…INGG) and 441–465 (VNAN…ELED). Residues 442 to 458 (NANGSGRNNNDNNNSDD) show a composition bias toward low complexity.

It belongs to the Tdpoz family. In terms of assembly, interacts with RAP2-4. Binds to MYB56 at the promoter of FLOWERING LOCUS T (FT). As to expression, ubiquitous.

The protein resides in the cytoplasm. It participates in protein modification; protein ubiquitination. Its function is as follows. May act as a substrate-specific adapter of an E3 ubiquitin-protein ligase complex (CUL3-RBX1-BTB) which mediates the ubiquitination and subsequent proteasomal degradation of target proteins. The chain is BTB/POZ and MATH domain-containing protein 4 (BPM4) from Arabidopsis thaliana (Mouse-ear cress).